The primary structure comprises 210 residues: Large ribosomal subunit protein uL22 (210 aa).

Residues 123 to 210 (NEMTSKETVK…TKSTKKEGSK (88 aa)) form a disordered region. Residues 126 to 157 (TSKETVKEPAKKPSAKVEKPAEAKAPKQETST) show a composition bias toward basic and acidic residues. Residues 158-185 (KKPTTTTESKPKTSKAPAQKQAAKVAKP) are compositionally biased toward low complexity.

It belongs to the universal ribosomal protein uL22 family. In terms of assembly, part of the 50S ribosomal subunit.

Its function is as follows. This protein binds specifically to 23S rRNA; its binding is stimulated by other ribosomal proteins, e.g. L4, L17, and L20. It is important during the early stages of 50S assembly. It makes multiple contacts with different domains of the 23S rRNA in the assembled 50S subunit and ribosome. Functionally, the globular domain of the protein is located near the polypeptide exit tunnel on the outside of the subunit, while an extended beta-hairpin is found that lines the wall of the exit tunnel in the center of the 70S ribosome. In Metamycoplasma arthritidis (strain 158L3-1) (Mycoplasma arthritidis), this protein is Large ribosomal subunit protein uL22.